We begin with the raw amino-acid sequence, 517 residues long: 2-isopropylmalate synthase (517 aa).

One can recognise a Pyruvate carboxyltransferase domain in the interval 5-268; sequence IIIFDTTLRD…DTRINTQEIH (264 aa). The Mn(2+) site is built by Asp14, His202, His204, and Asn238. The regulatory domain stretch occupies residues 393–517; sequence SLDVITSQTI…ADLKSHKISQ (125 aa).

Belongs to the alpha-IPM synthase/homocitrate synthase family. LeuA type 1 subfamily. In terms of assembly, homodimer. Mn(2+) serves as cofactor.

The protein resides in the cytoplasm. The catalysed reaction is 3-methyl-2-oxobutanoate + acetyl-CoA + H2O = (2S)-2-isopropylmalate + CoA + H(+). It participates in amino-acid biosynthesis; L-leucine biosynthesis; L-leucine from 3-methyl-2-oxobutanoate: step 1/4. Catalyzes the condensation of the acetyl group of acetyl-CoA with 3-methyl-2-oxobutanoate (2-ketoisovalerate) to form 3-carboxy-3-hydroxy-4-methylpentanoate (2-isopropylmalate). The polypeptide is 2-isopropylmalate synthase (Histophilus somni (strain 129Pt) (Haemophilus somnus)).